The primary structure comprises 491 residues: Zinc finger protein 655 (491 aa).

Positions 1–52 (MEEIPAQEAAGSPRVQFQSLETQSECLSPEPQFVQDTDMEQGLTGDGETREE) are disordered. The span at 15 to 26 (VQFQSLETQSEC) shows a compositional bias: polar residues. A Phosphoserine modification is found at glutamine 60. Residues lysine 77, lysine 190, and lysine 201 each participate in a glycyl lysine isopeptide (Lys-Gly) (interchain with G-Cter in SUMO2) cross-link. 6 C2H2-type zinc fingers span residues 212–234 (YKCDVCGKIFHQSSALTRHQRIH), 240–262 (YKCKECEKSFSQSSSLSRHKRIH), 303–325 (YKCSSCERVFSRSVHLTQHQKIH), 330–353 (CKCTVCGSDFCHTSYLLEHQRVHH), 380–402 (YTCSECGKDFRLNSHLIQHQRIH), and 408–430 (HECNECGKAFSQTSCLIQHHKMH).

This sequence belongs to the krueppel C2H2-type zinc-finger protein family. Interacts with VAV1 and CDK4. Interacts with INTS13; promoting association with the integrator complex.

The protein localises to the nucleus. Probable transcription factor. The sequence is that of Zinc finger protein 655 from Homo sapiens (Human).